Here is a 576-residue protein sequence, read N- to C-terminus: Polypeptide N-acetylgalactosaminyltransferase 12 (576 aa).

The Cytoplasmic segment spans residues 1–19; it reads MWGRAVRRRCPRGLRRGRE. The helical; Signal-anchor for type II membrane protein transmembrane segment at 20 to 37 threads the bilayer; sequence ALLALLALAGLGALLRAR. Positions 38 to 58 are disordered; that stretch reads SRSGTVDPGPPRTPLPGRHEP. The Lumenal segment spans residues 38-576; it reads SRSGTVDPGP…QRWFFKERMS (539 aa). 5 disulfide bridges follow: C120-C353, C344-C417, C453-C474, C501-C516, and C542-C561. The segment at 130–239 is catalytic subdomain A; sequence LPKTSVVIAF…EGWLEPLLQR (110 aa). Substrate-binding residues include D171 and R200. 2 residues coordinate Mn(2+): D223 and H225. The tract at residues 299–361 is catalytic subdomain B; that stretch reads VIRSPTMAGG…PCSHVGHVFP (63 aa). A substrate-binding site is contributed by W330. H358 contacts Mn(2+). Y366 contributes to the substrate binding site. A Ricin B-type lectin domain is found at 440 to 572; that stretch reads FFGMLQNRGL…NSDNQRWFFK (133 aa).

This sequence belongs to the glycosyltransferase 2 family. GalNAc-T subfamily. Mn(2+) serves as cofactor.

It localises to the golgi apparatus membrane. It carries out the reaction L-seryl-[protein] + UDP-N-acetyl-alpha-D-galactosamine = a 3-O-[N-acetyl-alpha-D-galactosaminyl]-L-seryl-[protein] + UDP + H(+). It catalyses the reaction L-threonyl-[protein] + UDP-N-acetyl-alpha-D-galactosamine = a 3-O-[N-acetyl-alpha-D-galactosaminyl]-L-threonyl-[protein] + UDP + H(+). The protein operates within protein modification; protein glycosylation. In terms of biological role, catalyzes the initial reaction in O-linked oligosaccharide biosynthesis, the transfer of an N-acetyl-D-galactosamine residue to a serine or threonine residue on the protein receptor. Has activity toward non-glycosylated peptides such as Muc5AC, Muc1a and EA2, and no detectable activity with Muc2 and Muc7. Displays enzymatic activity toward the Gal-NAc-Muc5AC glycopeptide, but no detectable activity to mono-GalNAc-glycosylated Muc1a, Muc2, Muc7 and EA2. May play an important role in the initial step of mucin-type oligosaccharide biosynthesis in digestive organs. This Mus musculus (Mouse) protein is Polypeptide N-acetylgalactosaminyltransferase 12 (Galnt12).